Reading from the N-terminus, the 321-residue chain is Mas-related G-protein coupled receptor member D (321 aa).

Residues 1–8 are Extracellular-facing; sequence MNSTLDSS. Asn-2 carries N-linked (GlcNAc...) asparagine glycosylation. The helical transmembrane segment at 9 to 29 threads the bilayer; the sequence is PAPGLTISPTMDLVTWIYFSV. Thr-30 is a topological domain (cytoplasmic). The helical transmembrane segment at 31 to 51 threads the bilayer; the sequence is FLAMATCVGGMAGNSLVIWLL. The Extracellular portion of the chain corresponds to 52-72; the sequence is SCNGMQRSPFCVYVLNLAVAD. Residues 73–93 traverse the membrane as a helical segment; sequence FLFLFCMASMLSLETGPLLIV. At 94–146 the chain is on the cytoplasmic side; that stretch reads NISAKIYEGMRRIKYFAYTAGLSLLTAISTQRCLSVLFPIWYKCHRPRHLSSV. A helical membrane pass occupies residues 147–167; the sequence is VSGALWALAFLMNFLASFFCV. Residues 168-181 are Extracellular-facing; that stretch reads QFWHPNKHQCFKVD. A helical membrane pass occupies residues 182–202; sequence IVFNSLILGIFMPVMILTSTI. The Cytoplasmic segment spans residues 203-220; sequence LFIRVRKNSLMQRRRPRR. A helical transmembrane segment spans residues 221-241; the sequence is LYVVILTSILVFLTCSLPLGI. Residues 242–260 are Extracellular-facing; it reads NWFLLYWVDVKRDVRLLYS. Residues 261 to 281 form a helical membrane-spanning segment; sequence CVSRFSSSLSSSANPVIYFLV. The Cytoplasmic segment spans residues 282–321; it reads GSQKSHRLQESLGAVLGRALRDEPEPEGRETPSTCTNDGV. A compositionally biased stretch (basic and acidic residues) spans 302 to 311; the sequence is RDEPEPEGRE. A disordered region spans residues 302 to 321; the sequence is RDEPEPEGRETPSTCTNDGV. Residues 312 to 321 are compositionally biased toward polar residues; sequence TPSTCTNDGV.

Belongs to the G-protein coupled receptor 1 family. Mas subfamily. In terms of tissue distribution, expressed in a subset of sensory neurons that includes nociceptors. Expressed in the subclass of non-peptidergic sensory neurons that are IB4(+) and VR1(-).

Its subcellular location is the cell membrane. Functionally, may regulate nociceptor function and/or development, including the sensation or modulation of pain. Functions as a specific membrane receptor for beta-alanine. The receptor couples with G-protein G(q) and G(i). The chain is Mas-related G-protein coupled receptor member D (Mrgprd) from Mus musculus (Mouse).